The following is a 292-amino-acid chain: N-acetylneuraminate lyase (292 aa).

The aceneuramate site is built by serine 47 and threonine 48. Tyrosine 136 functions as the Proton donor in the catalytic mechanism. The Schiff-base intermediate with substrate role is filled by lysine 164. Residues threonine 166, glycine 188, aspartate 190, glutamate 191, and serine 207 each coordinate aceneuramate.

The protein belongs to the DapA family. NanA subfamily. As to quaternary structure, homotetramer.

Its subcellular location is the cytoplasm. The enzyme catalyses aceneuramate = aldehydo-N-acetyl-D-mannosamine + pyruvate. It participates in amino-sugar metabolism; N-acetylneuraminate degradation; D-fructose 6-phosphate from N-acetylneuraminate: step 1/5. Catalyzes the reversible aldol cleavage of N-acetylneuraminic acid (sialic acid; Neu5Ac) to form pyruvate and N-acetylmannosamine (ManNAc) via a Schiff base intermediate. The chain is N-acetylneuraminate lyase from Actinobacillus pleuropneumoniae serotype 5b (strain L20).